Here is a 302-residue protein sequence, read N- to C-terminus: Glutaminase (302 aa).

The substrate site is built by Ser61, Asn111, Glu155, Asn162, Tyr186, Tyr238, and Val256.

The protein belongs to the glutaminase family. Homotetramer.

It catalyses the reaction L-glutamine + H2O = L-glutamate + NH4(+). This Pseudomonas aeruginosa (strain LESB58) protein is Glutaminase.